A 220-amino-acid polypeptide reads, in one-letter code: 7-cyano-7-deazaguanine synthase (220 aa).

7-17 (LSGGLDSAVCL) is a binding site for ATP. Zn(2+) contacts are provided by C191, C199, C202, and C205.

Belongs to the QueC family. In terms of assembly, homodimer. The cofactor is Zn(2+).

It carries out the reaction 7-carboxy-7-deazaguanine + NH4(+) + ATP = 7-cyano-7-deazaguanine + ADP + phosphate + H2O + H(+). The protein operates within purine metabolism; 7-cyano-7-deazaguanine biosynthesis. Functionally, catalyzes the ATP-dependent conversion of 7-carboxy-7-deazaguanine (CDG) to 7-cyano-7-deazaguanine (preQ(0)). The polypeptide is 7-cyano-7-deazaguanine synthase (Desulforudis audaxviator (strain MP104C)).